We begin with the raw amino-acid sequence, 114 residues long: UPF0342 protein SH1117 (114 aa).

Belongs to the UPF0342 family.

This is UPF0342 protein SH1117 from Staphylococcus haemolyticus (strain JCSC1435).